A 78-amino-acid polypeptide reads, in one-letter code: Large ribosomal subunit protein bL28 (78 aa).

Residues 1-21 (MSKVCQVTGKRPITGHNVSHA) form a disordered region.

It belongs to the bacterial ribosomal protein bL28 family.

The protein is Large ribosomal subunit protein bL28 of Cellvibrio japonicus (strain Ueda107) (Pseudomonas fluorescens subsp. cellulosa).